The following is a 315-amino-acid chain: Homoserine kinase (315 aa).

ATP is bound at residue 97 to 107; the sequence is PPARGLGSSAT.

The protein belongs to the GHMP kinase family. Homoserine kinase subfamily.

It localises to the cytoplasm. It carries out the reaction L-homoserine + ATP = O-phospho-L-homoserine + ADP + H(+). Its pathway is amino-acid biosynthesis; L-threonine biosynthesis; L-threonine from L-aspartate: step 4/5. Its function is as follows. Catalyzes the ATP-dependent phosphorylation of L-homoserine to L-homoserine phosphate. The polypeptide is Homoserine kinase (Synechococcus sp. (strain WH7803)).